A 165-amino-acid polypeptide reads, in one-letter code: Putative pre-16S rRNA nuclease (165 aa).

Belongs to the YqgF nuclease family.

It is found in the cytoplasm. Could be a nuclease involved in processing of the 5'-end of pre-16S rRNA. This Rhizobium meliloti (strain 1021) (Ensifer meliloti) protein is Putative pre-16S rRNA nuclease.